Reading from the N-terminus, the 434-residue chain is Putative nuclease OPG089 (434 aa).

6 residues coordinate Mg(2+): D33, D74, E168, D170, D196, and D198.

The protein belongs to the XPG/RAD2 endonuclease family. FEN1 subfamily. Requires Mg(2+) as cofactor.

The protein resides in the virion. Its function is as follows. Putative nuclease that seems to be required for double-strand break repair, homologous recombination, and production of full-length viral genomic DNA. This is Putative nuclease OPG089 (OPG089) from Vaccinia virus (strain Copenhagen) (VACV).